A 476-amino-acid chain; its full sequence is Aspartyl/glutamyl-tRNA(Asn/Gln) amidotransferase subunit B (476 aa).

It belongs to the GatB/GatE family. GatB subfamily. Heterotrimer of A, B and C subunits.

The catalysed reaction is L-glutamyl-tRNA(Gln) + L-glutamine + ATP + H2O = L-glutaminyl-tRNA(Gln) + L-glutamate + ADP + phosphate + H(+). It carries out the reaction L-aspartyl-tRNA(Asn) + L-glutamine + ATP + H2O = L-asparaginyl-tRNA(Asn) + L-glutamate + ADP + phosphate + 2 H(+). In terms of biological role, allows the formation of correctly charged Asn-tRNA(Asn) or Gln-tRNA(Gln) through the transamidation of misacylated Asp-tRNA(Asn) or Glu-tRNA(Gln) in organisms which lack either or both of asparaginyl-tRNA or glutaminyl-tRNA synthetases. The reaction takes place in the presence of glutamine and ATP through an activated phospho-Asp-tRNA(Asn) or phospho-Glu-tRNA(Gln). This Clostridium botulinum (strain 657 / Type Ba4) protein is Aspartyl/glutamyl-tRNA(Asn/Gln) amidotransferase subunit B.